The primary structure comprises 669 residues: DNA ligase (669 aa).

NAD(+)-binding positions include 32–36, 81–82, and glutamate 111; these read DAEYD and SL. Lysine 113 serves as the catalytic N6-AMP-lysine intermediate. Residues arginine 134, glutamate 171, lysine 290, and lysine 314 each contribute to the NAD(+) site. Residues cysteine 408, cysteine 411, cysteine 426, and cysteine 432 each coordinate Zn(2+). In terms of domain architecture, BRCT spans 591 to 669; that stretch reads EEALSLKGQT…EAELLAILGS (79 aa).

Belongs to the NAD-dependent DNA ligase family. LigA subfamily. Mg(2+) serves as cofactor. Mn(2+) is required as a cofactor.

It carries out the reaction NAD(+) + (deoxyribonucleotide)n-3'-hydroxyl + 5'-phospho-(deoxyribonucleotide)m = (deoxyribonucleotide)n+m + AMP + beta-nicotinamide D-nucleotide.. In terms of biological role, DNA ligase that catalyzes the formation of phosphodiester linkages between 5'-phosphoryl and 3'-hydroxyl groups in double-stranded DNA using NAD as a coenzyme and as the energy source for the reaction. It is essential for DNA replication and repair of damaged DNA. In Shewanella loihica (strain ATCC BAA-1088 / PV-4), this protein is DNA ligase.